A 442-amino-acid polypeptide reads, in one-letter code: Glycoprotein endo-alpha-1,2-mannosidase-like protein (442 aa).

Topologically, residues 1-8 (MNRLRRKA) are cytoplasmic. Residues 9–29 (CVALLLFTLFIFGTMMGLRTL) traverse the membrane as a helical; Signal-anchor for type II membrane protein segment. Over 30–442 (KPTDGFSDLA…FSKEKEQWLM (413 aa)) the chain is Lumenal.

Belongs to the glycosyl hydrolase 99 family.

The protein resides in the golgi apparatus membrane. This chain is Glycoprotein endo-alpha-1,2-mannosidase-like protein (maneal), found in Danio rerio (Zebrafish).